A 292-amino-acid chain; its full sequence is MSMPATSTKTTKLATSLIDEYALLGWRAMLTEVNLSPKPGLVDRINCGAHKDMALEDFHRSALAIQGWLPRFIEFGACSAEMAPEAVLHGLRPIGMACEGDMFRATAGVNTHKGSIFSLGLLCAAIGRLLQLNQPVTPTTVCSTAASFCRGLTDRELRTNNSRLTAGQRLYQQLGLTGARGEAEAGYPLVINHALPHYLTLLDQGLDPELALLDTLLLLMATNGDTNVASRGGEGGLRWLQREAQTLLQKGGIRTPTDLDYLRQFDRECIERNLSPGGSADLLILTWFLAQI.

Belongs to the CitG/MdcB family.

The catalysed reaction is 3'-dephospho-CoA + ATP = 2'-(5''-triphospho-alpha-D-ribosyl)-3'-dephospho-CoA + adenine. This is Probable 2-(5''-triphosphoribosyl)-3'-dephosphocoenzyme-A synthase from Shigella flexneri serotype 5b (strain 8401).